Reading from the N-terminus, the 525-residue chain is ATP synthase subunit beta, mitochondrial (525 aa).

A mitochondrion-targeting transit peptide spans 1 to 44 (MLKKQALSGIRRFSLATKQSFVKTSYKLPRKSWLNTAKFNTIRY). Residue 203-210 (GGAGVGKT) participates in ATP binding.

The protein belongs to the ATPase alpha/beta chains family. F-type ATPases have 2 components, CF(1) - the catalytic core - and CF(0) - the membrane proton channel. CF(1) has five subunits: alpha(3), beta(3), gamma(1), delta(1), epsilon(1). CF(0) has three main subunits: a, b and c.

The protein localises to the mitochondrion. Its subcellular location is the mitochondrion inner membrane. It catalyses the reaction ATP + H2O + 4 H(+)(in) = ADP + phosphate + 5 H(+)(out). Its function is as follows. Mitochondrial membrane ATP synthase (F(1)F(0) ATP synthase or Complex V) produces ATP from ADP in the presence of a proton gradient across the membrane which is generated by electron transport complexes of the respiratory chain. F-type ATPases consist of two structural domains, F(1) - containing the extramembraneous catalytic core, and F(0) - containing the membrane proton channel, linked together by a central stalk and a peripheral stalk. During catalysis, ATP synthesis in the catalytic domain of F(1) is coupled via a rotary mechanism of the central stalk subunits to proton translocation. Subunits alpha and beta form the catalytic core in F(1). Rotation of the central stalk against the surrounding alpha(3)beta(3) subunits leads to hydrolysis of ATP in three separate catalytic sites on the beta subunits. This Schizosaccharomyces pombe (strain 972 / ATCC 24843) (Fission yeast) protein is ATP synthase subunit beta, mitochondrial (atp2).